The sequence spans 350 residues: Sulfate-binding protein (350 aa).

The N-terminal stretch at 1–40 (MKTAWTRRSFLQSAALATATVITIAACGGNNQSSSGGSGQ) is a signal peptide.

This sequence belongs to the prokaryotic sulfate-binding protein family.

The protein resides in the periplasm. In terms of biological role, this protein specifically binds sulfate and is involved in its transmembrane transport. The chain is Sulfate-binding protein (sbpA) from Synechococcus elongatus (strain ATCC 33912 / PCC 7942 / FACHB-805) (Anacystis nidulans R2).